An 81-amino-acid polypeptide reads, in one-letter code: uncharacterized protein (81 aa).

This is an uncharacterized protein from Schizosaccharomyces pombe (strain 972 / ATCC 24843) (Fission yeast).